We begin with the raw amino-acid sequence, 553 residues long: Phosphoglucomutase (553 aa).

Positions 1 to 25 (MQATIKRYPTSPISGQTLGTSGLRK) are disordered. The span at 11–20 (SPISGQTLGT) shows a compositional bias: polar residues. Residues T20, R24, 117 to 118 (SH), and K131 contribute to the substrate site. S117 (phosphoserine intermediate) is an active-site residue. S117 contributes to the Mg(2+) binding site. 3 residues coordinate Mg(2+): D289, D291, and D293. Residues 293-294 (DR), T352, 371-373 (EES), K384, and R509 contribute to the substrate site.

The protein belongs to the phosphohexose mutase family. Requires Mg(2+) as cofactor.

Its subcellular location is the cytoplasm. It catalyses the reaction alpha-D-glucose 1-phosphate = alpha-D-glucose 6-phosphate. In terms of biological role, catalyzes the reversible conversion of glucose 1-phosphate into glucose 6-phosphate. This enzyme participates in both the breakdown and synthesis of glucose. The chain is Phosphoglucomutase from Entamoeba histolytica (strain ATCC 30459 / HM-1:IMSS / ABRM).